We begin with the raw amino-acid sequence, 292 residues long: Acetyl-coenzyme A carboxylase carboxyl transferase subunit beta (292 aa).

Positions 29–292 (LWSKCPECGQ…HGCLQGSAAV (264 aa)) constitute a CoA carboxyltransferase N-terminal domain. Zn(2+) contacts are provided by cysteine 33, cysteine 36, cysteine 52, and cysteine 55. Residues 33-55 (CPECGQVVYRKDLLANASVCSNC) form a C4-type zinc finger.

It belongs to the AccD/PCCB family. As to quaternary structure, acetyl-CoA carboxylase is a heterohexamer composed of biotin carboxyl carrier protein (AccB), biotin carboxylase (AccC) and two subunits each of ACCase subunit alpha (AccA) and ACCase subunit beta (AccD). Requires Zn(2+) as cofactor.

Its subcellular location is the cytoplasm. The enzyme catalyses N(6)-carboxybiotinyl-L-lysyl-[protein] + acetyl-CoA = N(6)-biotinyl-L-lysyl-[protein] + malonyl-CoA. It participates in lipid metabolism; malonyl-CoA biosynthesis; malonyl-CoA from acetyl-CoA: step 1/1. In terms of biological role, component of the acetyl coenzyme A carboxylase (ACC) complex. Biotin carboxylase (BC) catalyzes the carboxylation of biotin on its carrier protein (BCCP) and then the CO(2) group is transferred by the transcarboxylase to acetyl-CoA to form malonyl-CoA. This chain is Acetyl-coenzyme A carboxylase carboxyl transferase subunit beta, found in Synechococcus sp. (strain WH7803).